The following is an 82-amino-acid chain: Antimicrobial peptide Smp43 (82 aa).

The N-terminal stretch at 1–22 (MNRKLLLVTLMVTMLVMQPAEA) is a signal peptide. Positions 66 to 82 (EAGQMPFDEFMDILYES) are excised as a propeptide.

This sequence belongs to the non-disulfide-bridged peptide (NDBP) superfamily. Long chain multifunctional peptide (group 2) family. In terms of tissue distribution, expressed by the venom gland.

The protein localises to the secreted. Its subcellular location is the target cell membrane. In terms of biological role, antimicrobial peptide with moderate activity against Gram-positive bacteria and Gram-negative bacteria, as well as low activity against fungi. Acts by inducing bacterial membrane disruption. Shows activity against B.subtilis (MIC=4 ug/ml), S.epidermidis (MIC=64 ug/ml), S.aureus (MIC=32 ug/ml), E.coli (MIC=128 ug/ml), K.pneumoniae (MIC=64 ug/ml), P.aeruginosa (MIC=64 ug/ml), and C.albicans (MIC=128 ug/ml). Does not show hemolysis activity. This chain is Antimicrobial peptide Smp43, found in Scorpio palmatus (Israeli golden scorpion).